The chain runs to 359 residues: Tricarboxylate transport protein A, mitochondrial (359 aa).

3 Solcar repeats span residues 71 to 159 (THPW…LSNP), 170 to 256 (KASL…LRNW), and 266 to 351 (MHPL…VVKL). A run of 4 helical transmembrane segments spans residues 77–97 (IFAGGIAGGIEICITFPTEYV), 171–191 (ASLLCGLGAGIAEAVLVVCPM), 269–289 (LVTAMFGATAGAASVFGNTPL), and 336–356 (LDVAIVFVLYEEVVKLLNNVW).

It belongs to the mitochondrial carrier (TC 2.A.29) family. Post-translationally, possesses a short cleavable presequence, which, however, is found to be dispensable both for targeting to mitochondria and insertion into the inner membrane. However, the presequence is required to keep SLC25A1 in a soluble state and thus in an import-competent state. Mature SLC25A1 lacking the presequence is prone to aggregation.

The protein resides in the mitochondrion inner membrane. It carries out the reaction (S)-malate(in) + citrate(out) = (S)-malate(out) + citrate(in). It catalyses the reaction D-threo-isocitrate(in) + citrate(out) = D-threo-isocitrate(out) + citrate(in). The enzyme catalyses citrate(out) + succinate(in) = citrate(in) + succinate(out). The catalysed reaction is cis-aconitate(in) + citrate(out) = cis-aconitate(out) + citrate(in). It carries out the reaction trans-aconitate(in) + citrate(out) = trans-aconitate(out) + citrate(in). It catalyses the reaction phosphoenolpyruvate(in) + citrate(out) = phosphoenolpyruvate(out) + citrate(in). The enzyme catalyses maleate(in) + citrate(out) = maleate(out) + citrate(in). Mitochondrial electroneutral antiporter that exports citrate from the mitochondria into the cytosol in exchange for malate. Also able to mediate the exchange of citrate for isocitrate, phosphoenolpyruvate, cis-aconitate and to a lesser extent trans-aconitate, maleate and succinate. In the cytoplasm, citrate plays important roles in fatty acid and sterol synthesis, regulation of glycolysis, protein acetylation, and other physiopathological processes. This Danio rerio (Zebrafish) protein is Tricarboxylate transport protein A, mitochondrial.